The primary structure comprises 1240 residues: Ubiquitin carboxyl-terminal hydrolase 36 (1240 aa).

Disordered regions lie at residues 37-56 (AKTSNGGGDGSSTSGSSTDN) and 100-144 (SNGG…GTSA). 2 stretches are compositionally biased toward low complexity: residues 47–56 (SSTSGSSTDN) and 101–132 (NGGAASNGNGNYNGSNKTNGKFGAGNGHDNNG). The 311-residue stretch at 202–512 (TGMLNVGNTC…NAYIMFYELD (311 aa)) folds into the USP domain. The active-site Nucleophile is Cys211. The active-site Proton acceptor is His471. Positions 637–705 (ANKSSCNTLN…KMFEESSESV (69 aa)) are disordered. Positions 639–649 (KSSCNTLNNSK) are enriched in polar residues. The span at 650–662 (QHQPQQQQQQPQH) shows a compositional bias: low complexity. The span at 668–680 (SDEEEDSDDDNDN) shows a compositional bias: acidic residues. Thr715 is modified (phosphothreonine). Disordered stretches follow at residues 723 to 818 (YESA…KQKT), 831 to 998 (YKNK…GESL), 1076 to 1163 (DMSS…EYES), and 1198 to 1240 (RFAG…QQQS). 2 positions are modified to phosphoserine: Ser725 and Ser727. The span at 733 to 744 (QQQQQQQTLQQQ) shows a compositional bias: low complexity. Acidic residues predominate over residues 759-769 (SDTDDDDDEEQ). Residues 794–815 (NSSSSKTKSASNASSANVNSSK) show a composition bias toward low complexity. Acidic residues predominate over residues 843-859 (DDDDDDDEDEDEDEDEA). Residues 869–879 (TKSSSSSSSTS) show a composition bias toward low complexity. The span at 880-890 (LTNGWQQSQNG) shows a compositional bias: polar residues. Phosphoserine is present on Ser895. Position 898 is a phosphothreonine (Thr898). Ser901 carries the post-translational modification Phosphoserine. The segment covering 918–941 (DEDDDENVDGVADADDDDDNDEVA) has biased composition (acidic residues). The segment covering 976-988 (LNGSSKSQQTTPR) has biased composition (polar residues). Residues 1076-1103 (DMSSSSSSSSSTNSSSNSSSRSNGNSSN) show a composition bias toward low complexity. The span at 1111–1120 (AEAREQRKRD) shows a compositional bias: basic and acidic residues. Low complexity predominate over residues 1231 to 1240 (QSSGQQQQQS).

Belongs to the peptidase C19 family. As to quaternary structure, interacts with atms/PAF1, but not with CycT.

The protein localises to the nucleus. It is found in the nucleolus. The enzyme catalyses Thiol-dependent hydrolysis of ester, thioester, amide, peptide and isopeptide bonds formed by the C-terminal Gly of ubiquitin (a 76-residue protein attached to proteins as an intracellular targeting signal).. Required for maintaining multiple types of adult stem cells, including male and female germline, epithelial follicle cell and intestinal stem cells. May function as a transcriptional repressor by continually deubiquiting histone H2B at the promoters of genes critical for cellular differentiation, thereby preventing histone H3 'Lys-4' trimethylation (H3K4). Controls selective autophagy activation by ubiquitinated proteins. The sequence is that of Ubiquitin carboxyl-terminal hydrolase 36 (Usp36) from Drosophila grimshawi (Hawaiian fruit fly).